Here is a 411-residue protein sequence, read N- to C-terminus: Gamma-glutamyl phosphate reductase (411 aa).

The protein belongs to the gamma-glutamyl phosphate reductase family.

It is found in the cytoplasm. The enzyme catalyses L-glutamate 5-semialdehyde + phosphate + NADP(+) = L-glutamyl 5-phosphate + NADPH + H(+). The protein operates within amino-acid biosynthesis; L-proline biosynthesis; L-glutamate 5-semialdehyde from L-glutamate: step 2/2. In terms of biological role, catalyzes the NADPH-dependent reduction of L-glutamate 5-phosphate into L-glutamate 5-semialdehyde and phosphate. The product spontaneously undergoes cyclization to form 1-pyrroline-5-carboxylate. The chain is Gamma-glutamyl phosphate reductase from Wolinella succinogenes (strain ATCC 29543 / DSM 1740 / CCUG 13145 / JCM 31913 / LMG 7466 / NCTC 11488 / FDC 602W) (Vibrio succinogenes).